We begin with the raw amino-acid sequence, 1040 residues long: Multidrug resistance protein MdtB (1040 aa).

12 consecutive transmembrane segments (helical) span residues 25–45, 347–367, 369–389, 396–416, 440–460, 472–492, 537–557, 863–883, 888–908, 910–930, 968–988, and 998–1018; these read LLMA…PVAA, LMLA…NIPA, IIPG…MVFL, LTLM…IVVI, IGFT…PLLF, FAVT…TLTP, WLTL…WIVI, LGST…VLGV, FIHP…ALLA, IIAG…LIGI, ILMT…STGV, and IAMV…TPVI.

It belongs to the resistance-nodulation-cell division (RND) (TC 2.A.6) family. MdtB subfamily. In terms of assembly, part of a tripartite efflux system composed of MdtA, MdtB and MdtC. MdtB forms a heteromultimer with MdtC.

It is found in the cell inner membrane. The polypeptide is Multidrug resistance protein MdtB (Salmonella newport (strain SL254)).